The chain runs to 429 residues: Glutamate-1-semialdehyde 2,1-aminomutase 1 (429 aa).

The residue at position 268 (Lys268) is an N6-(pyridoxal phosphate)lysine.

This sequence belongs to the class-III pyridoxal-phosphate-dependent aminotransferase family. HemL subfamily. Homodimer. Pyridoxal 5'-phosphate is required as a cofactor.

It is found in the cytoplasm. It catalyses the reaction (S)-4-amino-5-oxopentanoate = 5-aminolevulinate. Its pathway is porphyrin-containing compound metabolism; protoporphyrin-IX biosynthesis; 5-aminolevulinate from L-glutamyl-tRNA(Glu): step 2/2. The polypeptide is Glutamate-1-semialdehyde 2,1-aminomutase 1 (Listeria innocua serovar 6a (strain ATCC BAA-680 / CLIP 11262)).